A 247-amino-acid polypeptide reads, in one-letter code: 3-deoxy-manno-octulosonate cytidylyltransferase (247 aa).

Belongs to the KdsB family.

It is found in the cytoplasm. It catalyses the reaction 3-deoxy-alpha-D-manno-oct-2-ulosonate + CTP = CMP-3-deoxy-beta-D-manno-octulosonate + diphosphate. The protein operates within nucleotide-sugar biosynthesis; CMP-3-deoxy-D-manno-octulosonate biosynthesis; CMP-3-deoxy-D-manno-octulosonate from 3-deoxy-D-manno-octulosonate and CTP: step 1/1. Its pathway is bacterial outer membrane biogenesis; lipopolysaccharide biosynthesis. Functionally, activates KDO (a required 8-carbon sugar) for incorporation into bacterial lipopolysaccharide in Gram-negative bacteria. The sequence is that of 3-deoxy-manno-octulosonate cytidylyltransferase from Methylorubrum extorquens (strain PA1) (Methylobacterium extorquens).